Here is a 969-residue protein sequence, read N- to C-terminus: Liprin-beta-1 (969 aa).

Ser-37 bears the Phosphoserine mark. Phosphothreonine is present on Thr-39. Ser-40 bears the Phosphoserine mark. The stretch at 99–310 (GDVYQERLAR…CLSRYRKMQD (212 aa)) forms a coiled coil. Position 291 is an N6-acetyllysine (Lys-291). Disordered regions lie at residues 342–361 (DLER…RDLL), 381–407 (LLPP…FEEG), and 424–482 (GVST…RKAR). Low complexity predominate over residues 346–358 (STSSTPGMGSPSR). Residues Ser-403 and Ser-435 each carry the phosphoserine modification. Residues 426–438 (STSSLQKSSSLGN) show a composition bias toward low complexity. A compositionally biased stretch (basic and acidic residues) spans 439 to 452 (LKKEASDGTDKAPT). Lys-440 is covalently cross-linked (Glycyl lysine isopeptide (Lys-Gly) (interchain with G-Cter in SUMO2)). Ser-500 is modified (phosphoserine). Positions 518–529 (AGTSRSKGSQGT) are enriched in polar residues. The segment at 518–593 (AGTSRSKGSQ…PRLGWSRDLG (76 aa)) is disordered. Ser-538 carries the phosphoserine modification. The segment covering 543 to 557 (KKSRGIMRLFGKLRR) has biased composition (basic residues). Ser-560 and Ser-595 each carry phosphoserine. 2 consecutive SAM domains span residues 606 to 670 (WTKE…LGSE) and 678 to 741 (LDFN…LRIN). Phosphoserine is present on residues Ser-753 and Ser-757. The 73-residue stretch at 763-835 (VQQWTNHRVM…ATHFNLLIGA (73 aa)) folds into the SAM 3 domain. Ser-957, Ser-959, and Ser-961 each carry phosphoserine. Thr-963 carries the phosphothreonine modification.

The protein belongs to the liprin family. Liprin-beta subfamily. Forms homodimers and heterodimers. Interacts with S100A4 in a Ca(2+)-dependent mode. Part of a cortical microtubule stabilization complex (CMSC) composed of KANK1, PPFIA1, PPFIBP1, ERC1/ELKS, PHLDB2/LL5beta, CLASPs, KIF21A and possibly additional interactors; within CMSCs KANK1 and PHLDB2/LL5beta seem to be the core components for recruiting microtubule-binding proteins KIF21A and CLASPs, whereas PPFIA1, PPFIBP1 and ERC1/ELKS serve as scaffolds for protein clustering. Interacts with KANK1 (via CC1 domain, residues 244-339).

It is found in the cytoplasm. The protein localises to the cell cortex. May regulate the disassembly of focal adhesions. Did not bind receptor-like tyrosine phosphatases type 2A. The sequence is that of Liprin-beta-1 (Ppfibp1) from Mus musculus (Mouse).